Consider the following 794-residue polypeptide: Elongator complex protein 2 (794 aa).

13 WD repeats span residues 55 to 93, 98 to 140, 147 to 188, 203 to 244, 286 to 328, 337 to 376, 384 to 423, 433 to 472, 557 to 601, 604 to 643, 654 to 693, 705 to 751, and 759 to 794; these read EHTK…TTKS, GHTS…YVCF, DGFC…AGEG, GHED…KEQM, GHEG…IWLE, GNSV…PQLW, GHYG…GANP, IHGY…ENFR, GHGY…QIQK, GHQL…VSYQ, VHTR…KESS, LKNE…WKLL, and AHHL…IKLT.

Belongs to the WD repeat ELP2 family. In terms of assembly, component of the elongator complex composed of Elp1, Elp2, Elp3, Elp4, Elp5 and Elp6. The elongator complex associates with and stabilizes microtubules; efficient interaction requires the full complex.

It is found in the cytoplasm. It localises to the nucleus. The protein resides in the cytoskeleton. The protein localises to the spindle. Its pathway is tRNA modification; 5-methoxycarbonylmethyl-2-thiouridine-tRNA biosynthesis. Its function is as follows. Component of the elongator complex, which is required for multiple tRNA modifications, including mcm5U (5-methoxycarbonylmethyl uridine), mcm5s2U (5-methoxycarbonylmethyl-2-thiouridine), and ncm5U (5-carbamoylmethyl uridine). The elongator complex catalyzes the formation of carboxymethyluridine in the wobble base at position 34 in tRNAs. Binding by the elongator complex stabilizes microtubules and promotes their growth. This induces central spindle asymmetry, promoting polarized signaling endosome trafficking during asymmetric cell division and cell fate assignation of sensory organ precursor cells. Involved in the regulation of the STAT pathway. The protein is Elongator complex protein 2 of Drosophila melanogaster (Fruit fly).